A 203-amino-acid polypeptide reads, in one-letter code: Snake venom metalloproteinase atroxase (203 aa).

Glu-1 bears the Pyrrolidone carboxylic acid (Glu) mark. Asn-5 carries N-linked (GlcNAc...) asparagine glycosylation. Positions 9 to 203 (RYIELVVVAD…KQYNPQIXNK (195 aa)) constitute a Peptidase M12B domain. Residues Glu-12 and Asp-96 each coordinate Ca(2+). His-145 contributes to the Zn(2+) binding site. Glu-146 is a catalytic residue. Residues His-149 and His-155 each coordinate Zn(2+). Cys-160 and Cys-167 are joined by a disulfide. Position 202 (Asn-202) interacts with Ca(2+).

Belongs to the venom metalloproteinase (M12B) family. P-I subfamily. In terms of assembly, monomer. Requires Zn(2+) as cofactor. The N-terminus is blocked. In terms of tissue distribution, expressed by the venom gland.

Its subcellular location is the secreted. The catalysed reaction is Cleavage of 5-His-|-Leu-6, 9-Ser-|-His-10, 10-His-|-Leu-11, 14-Ala-|-Leu-15 and 16-Tyr-|-Leu-17 in insulin B chain.. Its activity is regulated as follows. Inhibited by EDTA and alpha2-macroglobulin. Functionally, snake venom zinc metalloprotease that has Aalpha, Bbeta fibrin(ogen)olytic activities. It cleaves the Aalpha chain of fibrinogen first followed by the Bbeta chain and shows no effect on the gamma chain. Does not induce or inhibit platelet aggregation, and is unable to activate plasminogen. Exhibits low lethality when tested on mice. Intravenous administration results in thrombolysis within one hour followed by recanalization. Fibrinogenolytic activity results in a 60% decrease in the rat's plasma fibrinogen level. Histological examination of kidney, liver, heart and lung tissue shows no necrosis nor hemorrhage. This chain is Snake venom metalloproteinase atroxase, found in Crotalus atrox (Western diamondback rattlesnake).